Here is a 1370-residue protein sequence, read N- to C-terminus: DNA-directed RNA polymerase subunit beta (1370 aa).

It belongs to the RNA polymerase beta chain family. As to quaternary structure, the RNAP catalytic core consists of 2 alpha, 1 beta, 1 beta' and 1 omega subunit. When a sigma factor is associated with the core the holoenzyme is formed, which can initiate transcription.

The enzyme catalyses RNA(n) + a ribonucleoside 5'-triphosphate = RNA(n+1) + diphosphate. In terms of biological role, DNA-dependent RNA polymerase catalyzes the transcription of DNA into RNA using the four ribonucleoside triphosphates as substrates. This chain is DNA-directed RNA polymerase subunit beta, found in Albidiferax ferrireducens (strain ATCC BAA-621 / DSM 15236 / T118) (Rhodoferax ferrireducens).